The sequence spans 117 residues: Ig heavy chain V region UPC10 (117 aa).

The Ig-like domain occupies 1-116; sequence EVKLLESGGG…WGQVTTLTVS (116 aa).

The protein is Ig heavy chain V region UPC10 of Mus musculus (Mouse).